The sequence spans 597 residues: Elongation factor 4 (597 aa).

In terms of domain architecture, tr-type G spans 2–184; it reads KHIRNFSIIA…NIVSAIPAPE (183 aa). GTP is bound by residues 14–19 and 131–134; these read DHGKST and NKID.

This sequence belongs to the TRAFAC class translation factor GTPase superfamily. Classic translation factor GTPase family. LepA subfamily.

Its subcellular location is the cell inner membrane. The catalysed reaction is GTP + H2O = GDP + phosphate + H(+). Required for accurate and efficient protein synthesis under certain stress conditions. May act as a fidelity factor of the translation reaction, by catalyzing a one-codon backward translocation of tRNAs on improperly translocated ribosomes. Back-translocation proceeds from a post-translocation (POST) complex to a pre-translocation (PRE) complex, thus giving elongation factor G a second chance to translocate the tRNAs correctly. Binds to ribosomes in a GTP-dependent manner. The chain is Elongation factor 4 from Vibrio campbellii (strain ATCC BAA-1116).